Consider the following 282-residue polypeptide: Bis(5'-nucleosyl)-tetraphosphatase, symmetrical (282 aa).

This sequence belongs to the Ap4A hydrolase family.

It catalyses the reaction P(1),P(4)-bis(5'-adenosyl) tetraphosphate + H2O = 2 ADP + 2 H(+). Hydrolyzes diadenosine 5',5'''-P1,P4-tetraphosphate to yield ADP. This Paraburkholderia phymatum (strain DSM 17167 / CIP 108236 / LMG 21445 / STM815) (Burkholderia phymatum) protein is Bis(5'-nucleosyl)-tetraphosphatase, symmetrical.